We begin with the raw amino-acid sequence, 622 residues long: Type 2 DNA topoisomerase 6 subunit B (622 aa).

ATP-binding positions include N48, D80, 101-102 (SR), 111-118 (GQQGIGIS), and K435.

The protein belongs to the TOP6B family. In terms of assembly, homodimer. Heterotetramer of two Top6A and two Top6B chains.

It carries out the reaction ATP-dependent breakage, passage and rejoining of double-stranded DNA.. Functionally, relaxes both positive and negative superturns and exhibits a strong decatenase activity. The protein is Type 2 DNA topoisomerase 6 subunit B of Methanococcoides burtonii (strain DSM 6242 / NBRC 107633 / OCM 468 / ACE-M).